A 355-amino-acid chain; its full sequence is uncharacterized protein (355 aa).

Residue 132-139 coordinates ATP; sequence GPPGCGKT.

It belongs to the AAA ATPase family.

It localises to the mitochondrion. This is an uncharacterized protein from Schizosaccharomyces pombe (strain 972 / ATCC 24843) (Fission yeast).